A 281-amino-acid chain; its full sequence is Pantothenate synthetase (281 aa).

31-38 (MGNLHAGH) serves as a coordination point for ATP. Histidine 38 serves as the catalytic Proton donor. Glutamine 62 is a (R)-pantoate binding site. Glutamine 62 provides a ligand contact to beta-alanine. 150 to 153 (GKKD) lines the ATP pocket. Glutamine 156 is a (R)-pantoate binding site. ATP contacts are provided by residues valine 179 and 187-190 (MSSR).

Belongs to the pantothenate synthetase family. As to quaternary structure, homodimer.

The protein localises to the cytoplasm. It catalyses the reaction (R)-pantoate + beta-alanine + ATP = (R)-pantothenate + AMP + diphosphate + H(+). It functions in the pathway cofactor biosynthesis; (R)-pantothenate biosynthesis; (R)-pantothenate from (R)-pantoate and beta-alanine: step 1/1. Its function is as follows. Catalyzes the condensation of pantoate with beta-alanine in an ATP-dependent reaction via a pantoyl-adenylate intermediate. The sequence is that of Pantothenate synthetase from Xylella fastidiosa (strain M12).